The chain runs to 390 residues: Manganese peroxidase 2 (390 aa).

The signal sequence occupies residues 1 to 23 (MAFNFAAILAFVSLAAVTSAAPS). 5 disulfides stabilise this stretch: C27-C39, C38-C313, C57-C141, C277-C343, and C365-C372. Mn(2+)-binding residues include E59 and E63. The Proton acceptor role is filled by H70. The Ca(2+) site is built by D71, G86, D88, and S90. An N-linked (GlcNAc...) asparagine glycan is attached at N155. H197 provides a ligand contact to heme b. S198 provides a ligand contact to Ca(2+). D203 is a Mn(2+) binding site. Ca(2+) is bound by residues D215, T217, and D222. A glycan (N-linked (GlcNAc...) asparagine) is linked at N241.

The protein belongs to the peroxidase family. Ligninase subfamily. Heme b is required as a cofactor. It depends on Ca(2+) as a cofactor.

Its subcellular location is the secreted. The enzyme catalyses 2 Mn(2+) + H2O2 + 2 H(+) = 2 Mn(3+) + 2 H2O. In terms of biological role, catalyzes the oxidation of Mn(2+) to Mn(3+). The latter, acting as a diffusible redox mediator, is capable of oxidizing a variety of lignin compounds. This chain is Manganese peroxidase 2 (mnp2), found in Phlebia radiata (White-rot fungus).